The sequence spans 1033 residues: Integrin alpha-IIb (1033 aa).

A signal peptide spans 1–31; the sequence is MARASCAWHSLWLLQWTPLFLGPSAVPPVWA. At 32-988 the chain is on the extracellular side; that stretch reads LNLDSEKFSV…TQLLRALEER (957 aa). FG-GAP repeat units follow at residues 35–96, 109–173, 184–237, 252–304, 305–370, 372–431, and 434–495; these read DSEK…GGKC, NLGF…GRAE, SVYA…ISSY, TYDN…DSYY, QPLH…PQAL, TPTL…GLSP, and SQVL…VQDS. N-linked (GlcNAc...) asparagine glycosylation is found at N46 and N75. 3 disulfides stabilise this stretch: C87/C96, C138/C161, and C177/C197. 19 residues coordinate Ca(2+): E273, D275, D277, T280, E282, D327, N329, D331, R333, D335, D395, D399, Y401, D403, D456, D458, N460, Y462, and D464. Disulfide bonds link C503-C514 and C520-C575. Residue N600 is glycosylated (N-linked (GlcNAc...) asparagine). Cystine bridges form between C632–C638, C704–C717, C856–C916, and C905–C911. N710 carries an N-linked (GlcNAc...) asparagine glycan. N957 is a glycosylation site (N-linked (GlcNAc...) asparagine). The chain crosses the membrane as a helical span at residues 989 to 1014; that stretch reads AIPVWWVLVGVLGGLLLLTLLVLAMW. The Cytoplasmic segment spans residues 1015–1033; that stretch reads KAGFFKRNRPPLEEDEEEE. Residues 1017 to 1021 carry the GFFKR motif motif; the sequence is GFFKR.

It belongs to the integrin alpha chain family. In terms of assembly, heterodimer of an alpha and a beta subunit. The alpha subunit is composed of a heavy and a light chain linked by a disulfide bond. Alpha-IIb associates with beta-3. Directly interacts with RNF181. Interacts (via C-terminus cytoplasmic tail region) with CIB1; the interaction is direct and calcium-dependent. Interacts (via C-terminus cytoplasmic tail region) with CIB2, CIB3 and CIB4; the interactions are stabilized/increased in a calcium and magnesium-dependent manner. ITGA2B:ITGB3 interacts with PPIA/CYPA; the interaction is ROS and PPIase activity-dependent and is increased in the presence of thrombin. ITGA2B:ITGB3 interacts with SELP (via C-type lectin domain); the interaction mediates cell-cell interaction and adhesion. Post-translationally, cleaved by ELANE; the cleavage promotes activation of platelet fibrinogen receptor integrin alpha-IIb/beta-3.

It is found in the membrane. Integrin alpha-IIb/beta-3 is a receptor for fibronectin, fibrinogen, plasminogen, prothrombin, thrombospondin and vitronectin. It recognizes the sequence R-G-D in a wide array of ligands. It recognizes the sequence H-H-L-G-G-G-A-K-Q-A-G-D-V in fibrinogen gamma chain. Following activation integrin alpha-IIb/beta-3 brings about platelet/platelet interaction through binding of soluble fibrinogen. This step leads to rapid platelet aggregation which physically plugs ruptured endothelial cell surface. The protein is Integrin alpha-IIb (Itga2b) of Mus musculus (Mouse).